We begin with the raw amino-acid sequence, 144 residues long: uncharacterized protein (144 aa).

This is an uncharacterized protein from Vibrio parahaemolyticus serotype O3:K6 (strain RIMD 2210633).